The chain runs to 790 residues: DNA ligase 1 (790 aa).

The transit peptide at 1 to 64 (MLAIRSSNYL…AFDALMSNAR (64 aa)) directs the protein to the mitochondrion. The disordered stretch occupies residues 64–142 (RAAAKKKTPQ…TGAKKAKTLS (79 aa)). Residues 68–75 (KKKTPQTT) carry the Nuclear localization signal 1 motif. Positions 116–128 (DSANPRSDTSSIA) are enriched in polar residues. Positions 337 to 346 (KLRLGFSGQT) are interaction with target DNA. Glutamate 442 provides a ligand contact to ATP. Lysine 444 acts as the N6-AMP-lysine intermediate in catalysis. Residues arginine 449 and arginine 465 each coordinate ATP. Glutamate 497 is a Mg(2+) binding site. The short motif at 505–512 (KKKILPFQ) is the Nuclear localization signal 2 element. Residues 518 to 520 (ARK) form an interaction with target DNA region. Glutamate 596 lines the Mg(2+) pocket. Residues lysine 601, arginine 614, and lysine 620 each contribute to the ATP site. The disordered stretch occupies residues 757–790 (DKKPEEATSSEQIADLYQAQKHNHPSNEVKGDDD). Over residues 781-790 (PSNEVKGDDD) the composition is skewed to basic and acidic residues.

The protein belongs to the ATP-dependent DNA ligase family. The cofactor is Mg(2+). As to expression, expressed in all vegetative and reproductive tissues.

Its subcellular location is the mitochondrion. It localises to the nucleus. The catalysed reaction is ATP + (deoxyribonucleotide)n-3'-hydroxyl + 5'-phospho-(deoxyribonucleotide)m = (deoxyribonucleotide)n+m + AMP + diphosphate.. Essential protein. DNA ligase that seals nicks in double-stranded DNA during DNA replication, DNA recombination and DNA repair. Involved in repair of both single strand breaks (SSBs) and double strand breaks (DSBs). Required in the endosperm for embryogenesis, probably to repair DNA-breaks generated by DME. The protein is DNA ligase 1 (LIG1) of Arabidopsis thaliana (Mouse-ear cress).